The following is a 489-amino-acid chain: MSDDLPIDIHSSKLLDWLVSRRHCNKDWQKSVVAIREKIKHAILDMPESPKIVELLQGAYINYFHCCQIIEILRDTEKDTKNFLGFYSSQRMKDWQEIEGMYKKDNVYLAEAAQILQRLAQYEIPALRKQISKMDQSVTDAIRKHSEYGKQAEDGRKQFEKEISRMQLKGVHLRKELLELAADLPAFYEKITAEIRKISAARDYFQAFRDYMSLGAAPKDAAPILPIIGLIGERGLDVTTYEWKYNQKPDKVEKPNFEMLLTAAEDSDEIDFGGGDEIDFGIAAEDDAVIDFSAVVDLVADDTGAVGEAIASGQDALHLLENSEAQKAVKHELIELLAFLSMRLDDETRETTADVLIRGAEKRPDGVAAVTEKRLKTWITEVEGILKELENPQKVHLFKIRGSPQYVEQVVEELEKKRDMEHRYKRLQTLMTENQETARQSVTKSNVELKTIVESTRVLQKQIEAEISKKYNGRRVNLMGGINQALGGN.

The protein belongs to the CDK5RAP3 family.

In terms of biological role, substrate adapter of E3 ligase complexes mediating ufmylation, the covalent attachment of the ubiquitin-like modifier UFM1 to substrate proteins, and which is involved in various processes, such as ribosome recycling and reticulophagy (also called ER-phagy). This Caenorhabditis elegans protein is CDK5RAP3 protein homolog.